We begin with the raw amino-acid sequence, 216 residues long: Glycerol-3-phosphate acyltransferase (216 aa).

A run of 6 helical transmembrane segments spans residues 3–23, 48–68, 82–102, 112–132, 142–162, and 166–186; these read FPIFALFSFVSGSIPFGYWIA, IGWKFGFIVLALDITKGMLPV, FQLLCGVCAVLGHMFSPFLGF, FGVFLVLTPIACLGAVLVFWV, LGSIFASITLPLVYAFSTILL, and EVSYWVLGTMVFISFGIILTH.

It belongs to the PlsY family. Probably interacts with PlsX.

It is found in the cell inner membrane. It catalyses the reaction an acyl phosphate + sn-glycerol 3-phosphate = a 1-acyl-sn-glycero-3-phosphate + phosphate. Its pathway is lipid metabolism; phospholipid metabolism. Catalyzes the transfer of an acyl group from acyl-phosphate (acyl-PO(4)) to glycerol-3-phosphate (G3P) to form lysophosphatidic acid (LPA). This enzyme utilizes acyl-phosphate as fatty acyl donor, but not acyl-CoA or acyl-ACP. This Leptospira interrogans serogroup Icterohaemorrhagiae serovar Lai (strain 56601) protein is Glycerol-3-phosphate acyltransferase.